The chain runs to 253 residues: Type III pantothenate kinase (253 aa).

6 to 13 (DVGNTNTV) is a binding site for ATP. Residue 103-106 (GADR) participates in substrate binding. D105 acts as the Proton acceptor in catalysis. D125 provides a ligand contact to K(+). Residue T128 coordinates ATP. A substrate-binding site is contributed by T180.

The protein belongs to the type III pantothenate kinase family. In terms of assembly, homodimer. Requires NH4(+) as cofactor. The cofactor is K(+).

It is found in the cytoplasm. The enzyme catalyses (R)-pantothenate + ATP = (R)-4'-phosphopantothenate + ADP + H(+). Its pathway is cofactor biosynthesis; coenzyme A biosynthesis; CoA from (R)-pantothenate: step 1/5. Its function is as follows. Catalyzes the phosphorylation of pantothenate (Pan), the first step in CoA biosynthesis. This Parafrankia sp. (strain EAN1pec) protein is Type III pantothenate kinase.